Consider the following 481-residue polypeptide: Sphingosine kinase 2 (481 aa).

The DAGKc domain maps to 111–253 (GRPKRLLVFV…VDVATIAQGN (143 aa)). ATP is bound by residues 121 to 123 (NPF) and Thr153. 178 to 181 (SGDG) contributes to the substrate binding site. Asp180 acts as the Proton donor/acceptor in catalysis. ATP is bound by residues Glu185 and 210-212 (GTG). Asp271 lines the substrate pocket. Residues Arg278, Arg284, and 441–443 (DGE) contribute to the ATP site.

It depends on Mg(2+) as a cofactor. In terms of tissue distribution, highly expressed in flowers and siliques and at lower levels in roots, leaves and stems.

It is found in the vacuole membrane. It carries out the reaction a sphingoid base + ATP = a sphingoid 1-phosphate + ADP + H(+). Its activity is regulated as follows. Activated by phosphatidic acid (PA). Binding with PA stimulates the activity by promoting the binding of substrate to the catalytic site. Its function is as follows. Involved in the production of sphingolipid metabolites. Phosphorylates sphingosine and various l sphingoid long-chain base (LCB) products, such as phytosphingosine (PHS, 4-hydroxysphinganine), 4-hydroxy-8-sphingenine, 4,8-sphingadienine and D-erythro-dihydrosphingosine, but has a very few activity toward D,L-threo- dihydrosphingosine. Is required for abscisic acid (ABA) signaling that mediates stomatal closure, inhibition of seed germination and root elongation. May function upstream of PLDALPHA1 and phosphatidic acid (PA) in an amplification response to ABA that mediates stomatal closure. This chain is Sphingosine kinase 2 (SPHK2), found in Arabidopsis thaliana (Mouse-ear cress).